Reading from the N-terminus, the 666-residue chain is DNA ligase (666 aa).

Residues 31–35, 80–81, and Glu-110 contribute to the NAD(+) site; these read DKEFD and SL. Catalysis depends on Lys-112, which acts as the N6-AMP-lysine intermediate. Residues Arg-133, Glu-170, Lys-285, and Lys-309 each coordinate NAD(+). Zn(2+) contacts are provided by Cys-404, Cys-407, Cys-422, and Cys-428. One can recognise a BRCT domain in the interval 588–666; the sequence is GYTDKLAGQS…SEDEFLKLIS (79 aa).

This sequence belongs to the NAD-dependent DNA ligase family. LigA subfamily. It depends on Mg(2+) as a cofactor. Requires Mn(2+) as cofactor.

It carries out the reaction NAD(+) + (deoxyribonucleotide)n-3'-hydroxyl + 5'-phospho-(deoxyribonucleotide)m = (deoxyribonucleotide)n+m + AMP + beta-nicotinamide D-nucleotide.. In terms of biological role, DNA ligase that catalyzes the formation of phosphodiester linkages between 5'-phosphoryl and 3'-hydroxyl groups in double-stranded DNA using NAD as a coenzyme and as the energy source for the reaction. It is essential for DNA replication and repair of damaged DNA. In Bacteroides thetaiotaomicron (strain ATCC 29148 / DSM 2079 / JCM 5827 / CCUG 10774 / NCTC 10582 / VPI-5482 / E50), this protein is DNA ligase.